A 202-amino-acid chain; its full sequence is N-(5'-phosphoribosyl)anthranilate isomerase (202 aa).

It belongs to the TrpF family.

The catalysed reaction is N-(5-phospho-beta-D-ribosyl)anthranilate = 1-(2-carboxyphenylamino)-1-deoxy-D-ribulose 5-phosphate. It participates in amino-acid biosynthesis; L-tryptophan biosynthesis; L-tryptophan from chorismate: step 3/5. In Listeria monocytogenes serotype 4b (strain CLIP80459), this protein is N-(5'-phosphoribosyl)anthranilate isomerase.